Consider the following 348-residue polypeptide: MKGLFKNKSRLPGEIVRQTRDLIALAESEEEETDARNSKRLGICAELCRNIRDLKSILYGNGEAEPVPEACLLLTQEFFRADTLRPLIKSIPKLDLEARKDATQIVANLQKQQVEFRLVASEYLESNLDVIDSLVEGIDHDHELALHYTGMLKECVRHQVVAKYILESKNLEKFFDYVQLPYFDVATDASKIFRELLTRHKSTVAEYLAKNYEWFFAEYNTKLLEKGSYFTKRQASKLLGDVLMDRSNSGVMVKYVSSLDNLRIMMNLLREPTKNIQLEAFHIFKLFVANENKPEDIVAILVANRTKILRLFADLKPEKEDVGFETDKALVMNEIATLSLLDIKTADR.

It belongs to the Mo25 family.

The sequence is that of MO25-like protein At2g03410 from Arabidopsis thaliana (Mouse-ear cress).